The primary structure comprises 130 residues: Holo-[acyl-carrier-protein] synthase (130 aa).

Mg(2+) is bound by residues D8 and E62.

It belongs to the P-Pant transferase superfamily. AcpS family. Mg(2+) is required as a cofactor.

It localises to the cytoplasm. The enzyme catalyses apo-[ACP] + CoA = holo-[ACP] + adenosine 3',5'-bisphosphate + H(+). Its function is as follows. Transfers the 4'-phosphopantetheine moiety from coenzyme A to a Ser of acyl-carrier-protein. The polypeptide is Holo-[acyl-carrier-protein] synthase (Polynucleobacter asymbioticus (strain DSM 18221 / CIP 109841 / QLW-P1DMWA-1) (Polynucleobacter necessarius subsp. asymbioticus)).